The primary structure comprises 618 residues: Pyocin-S1 (618 aa).

This sequence belongs to the colicin/pyosin nuclease family. In terms of assembly, purified pyocin S1 makes up a complex of the two (large and small) proteins. The large protein, but not the pyocin complex, shows in vitro DNase activity.

In terms of biological role, causes breakdown of chromosomal DNA as well as complete inhibition of lipid synthesis in sensitive cells. This is Pyocin-S1 (pys1) from Pseudomonas aeruginosa.